Consider the following 24-residue polypeptide: Grammistin Pp 4b (24 aa).

As to quaternary structure, exists as aggregates of 3-4 molecules. In terms of tissue distribution, expressed by the skin glands.

It localises to the secreted. In terms of biological role, thanks to its abundant amphiphilic alpha-helices, it may integrate into membrane phospholipids, leading to lysis of the membrane. Its hemolytic activity is inhibited by phospholipids, but not by cholesterol. Has antibacterial activity with a broad spectrum against various species of bacteria including both Gram-positive and Gram-negative groups. Also has ichthyotoxic activity. The chain is Grammistin Pp 4b from Pogonoperca punctata (Clown grouper).